The sequence spans 620 residues: Chaperone protein HscA homolog (620 aa).

This sequence belongs to the heat shock protein 70 family.

Functionally, chaperone involved in the maturation of iron-sulfur cluster-containing proteins. Has a low intrinsic ATPase activity which is markedly stimulated by HscB. The polypeptide is Chaperone protein HscA homolog (Herminiimonas arsenicoxydans).